Consider the following 331-residue polypeptide: MLIDKLMKNTREIVTLEDAQKLDQKAGVKSYIGIEPSGIPHVATAVMWPRKLAELQDDIKIYVLLADWHAMINNKLHGDLDLIRKGGELLKRSFMAEGLTKAEYLWASQLVSSSNYWEMFIKTAKRSTLKRLTRALPIMGRTEADAEKDFSMYIYPIMQVTDIFYLDVDIAFGGMDQRHAHMLARDIADKMKVKKAVSVHGYLLSSLKGNTRMDNFVKMSKSDPNSAILINDEYKDIERKVNAAFCPPEKVDGNPLAEIMKYVLIPYYGRDIIIEKPSGNVRIENVDQFQNDYISGKIAPTELKKAMIPILDEMIEPARKVAYDMDLSIFS.

L-tyrosine is bound by residues Y31, Y155, Q159, D162, and Q177. The 'KMSKS' region signature appears at 218-222 (KMSKS). K221 serves as a coordination point for ATP.

The protein belongs to the class-I aminoacyl-tRNA synthetase family. TyrS type 4 subfamily. In terms of assembly, homodimer.

The protein localises to the cytoplasm. It catalyses the reaction tRNA(Tyr) + L-tyrosine + ATP = L-tyrosyl-tRNA(Tyr) + AMP + diphosphate + H(+). In terms of biological role, catalyzes the attachment of tyrosine to tRNA(Tyr) in a two-step reaction: tyrosine is first activated by ATP to form Tyr-AMP and then transferred to the acceptor end of tRNA(Tyr). The protein is Tyrosine--tRNA ligase of Thermoplasma volcanium (strain ATCC 51530 / DSM 4299 / JCM 9571 / NBRC 15438 / GSS1).